A 450-amino-acid polypeptide reads, in one-letter code: MKRRYFGTDGIRGQSNVFPMTPDLAMRVGIAAGTIFRRGNHRHRVVIGKDTRLSGYMLENAMVAGFTAAGLDAFILGPIPTPAVAMLTRSLRADLGVMISASHNPYEDNGIKLFGPDGYKLSDDIEAEIEDLLERDLNAQLAKSDDIGRAKRVDGVHDRYIEHAKRTLPRDVTLQGLRIAIDCANGAAYKVAPAVLWELGAEVVTIGNEPNGTNINLNCGSTSPVALQKKVDEVRADIGIALDGDADRVIIVDENGSIVDGDQLMAVIAESWAESQQLRGNGIVATVMSNLGLERFLDDKGLGLARTKVGDRYVVEHMRQHNYNVGGEQSGHIVLSDYGTTGDGLVAALQILAAVKRTGRTVSEVCRRFEPVPQLLRNVRISGGKPLEDIQVQKAIADAEAELARNGRLVIRPSGTEPLIRVMAEGDDRAQIERIVNELIGTISNVRTAA.

The active-site Phosphoserine intermediate is the Ser102. Mg(2+) contacts are provided by Ser102, Asp243, Asp245, and Asp247. Phosphoserine is present on Ser102.

The protein belongs to the phosphohexose mutase family. Mg(2+) serves as cofactor. In terms of processing, activated by phosphorylation.

The catalysed reaction is alpha-D-glucosamine 1-phosphate = D-glucosamine 6-phosphate. Catalyzes the conversion of glucosamine-6-phosphate to glucosamine-1-phosphate. The sequence is that of Phosphoglucosamine mutase from Rhizobium johnstonii (strain DSM 114642 / LMG 32736 / 3841) (Rhizobium leguminosarum bv. viciae).